The following is a 258-amino-acid chain: MISKETFEIFPSVDIVDGIAMTSNSAIRLTRGESSTLRRPLGTPAEVALAWQNAGAKWIHVVDLDAASGRGSNSHLIADVLAAVDINVQVCGGIRDETILRKVLATGCQRVNLGTAALENPDWCAQAIAEYGDKIAIALDVKSTSEGYQLATHGWNVSKGNLWDLLERLDKQGCQRYVVTDVERGGMMSSPNFTLLQEVCAKTSSPVIAGGGVSSLDDLRALADLSTIGVEGAILGQALHIGKVPLEDALAATQSPRR.

The active-site Proton acceptor is the Asp14. Asp140 acts as the Proton donor in catalysis.

Belongs to the HisA/HisF family.

It is found in the cytoplasm. The enzyme catalyses 1-(5-phospho-beta-D-ribosyl)-5-[(5-phospho-beta-D-ribosylamino)methylideneamino]imidazole-4-carboxamide = 5-[(5-phospho-1-deoxy-D-ribulos-1-ylimino)methylamino]-1-(5-phospho-beta-D-ribosyl)imidazole-4-carboxamide. It participates in amino-acid biosynthesis; L-histidine biosynthesis; L-histidine from 5-phospho-alpha-D-ribose 1-diphosphate: step 4/9. This is 1-(5-phosphoribosyl)-5-[(5-phosphoribosylamino)methylideneamino] imidazole-4-carboxamide isomerase 2 (hisA2) from Photorhabdus laumondii subsp. laumondii (strain DSM 15139 / CIP 105565 / TT01) (Photorhabdus luminescens subsp. laumondii).